A 122-amino-acid chain; its full sequence is XTAVQTLDISPVGRVEGDLDSXSILEYFRNAILARFGGGLGKYAPFTGTNYEIGVTISGDKDPQAGLVVTPRESTTXGLNEPFYIKPYVSXGYIPHEDGALAHXIEVDGVVVEAYTQAELFR.

Fe cation serves as cofactor.

The catalysed reaction is 2 Fe(III)-[cytochrome c3] + H2 = 2 Fe(II)-[cytochrome c3] + 2 H(+). The chain is Cytochrome c3 hydrogenase large chain (hoxG) from Acidithiobacillus ferrooxidans (Thiobacillus ferrooxidans).